A 318-amino-acid chain; its full sequence is Cytosolic Fe-S cluster assembly factor Nubp1 homolog (318 aa).

A compositionally biased stretch (basic and acidic residues) spans 1-15 (MSAPEVENKPADAPE). The disordered stretch occupies residues 1-29 (MSAPEVENKPADAPEHCPGTESENAGKAS). Residues Cys-17, Cys-31, Cys-34, and Cys-40 each coordinate [4Fe-4S] cluster. Residue 70–77 (GKGGVGKS) coordinates ATP. 2 residues coordinate [4Fe-4S] cluster: Cys-245 and Cys-248.

This sequence belongs to the Mrp/NBP35 ATP-binding proteins family. NUBP1/NBP35 subfamily. As to quaternary structure, heterotetramer of 2 Nubp1 and 2 Nubp2 chains. The cofactor is [4Fe-4S] cluster.

It is found in the cytoplasm. Functionally, component of the cytosolic iron-sulfur (Fe/S) protein assembly (CIA) machinery. Required for maturation of extramitochondrial Fe-S proteins. The Nubp1-Nubp2 heterotetramer forms a Fe-S scaffold complex, mediating the de novo assembly of an Fe-S cluster and its transfer to target apoproteins. In Aedes aegypti (Yellowfever mosquito), this protein is Cytosolic Fe-S cluster assembly factor Nubp1 homolog.